The sequence spans 179 residues: Translation initiation factor IF-3 (179 aa).

It belongs to the IF-3 family. As to quaternary structure, monomer.

It is found in the cytoplasm. Its function is as follows. IF-3 binds to the 30S ribosomal subunit and shifts the equilibrium between 70S ribosomes and their 50S and 30S subunits in favor of the free subunits, thus enhancing the availability of 30S subunits on which protein synthesis initiation begins. The polypeptide is Translation initiation factor IF-3 (Treponema pallidum (strain Nichols)).